A 494-amino-acid polypeptide reads, in one-letter code: Solute carrier family 2, facilitated glucose transporter member 3 (494 aa).

At 1 to 10 (MGTTKVTAPL) the chain is on the cytoplasmic side. A helical membrane pass occupies residues 11–32 (IFAISVATIGSFQFGYNTGVIN). The Extracellular portion of the chain corresponds to 33–64 (APEAIIKDFLNYTLEERSEPPPSSVLLTSLWS). An N-linked (GlcNAc...) asparagine glycan is attached at Asn43. The chain crosses the membrane as a helical span at residues 65–85 (LSVAIFSVGGMIGSFSVGLFV). Topologically, residues 86-90 (NRFGR) are cytoplasmic. Residues 91–111 (GNSMLIVNLLAIAGGCLMGFC) form a helical membrane-spanning segment. Over 112-118 (KIAESVE) the chain is Extracellular. Residues 119-142 (MLILGRLIIGLFCGLCTGFVPMYI) form a helical membrane-spanning segment. Residues 143-153 (GEISPTALRGA) lie on the Cytoplasmic side of the membrane. Residues 154–174 (FGTLNQLGIVIGILVAQIFGL) form a helical membrane-spanning segment. Gln159 lines the D-glucose pocket. Over 175 to 183 (KVILGTEDL) the chain is Extracellular. Residues 184–204 (WPLLLGFTILPAIIQCAALPF) form a helical membrane-spanning segment. The Cytoplasmic segment spans residues 205–269 (CPESPRFLLI…LFRAPNYRQP (65 aa)). The residue at position 232 (Thr232) is a Phosphothreonine. The helical transmembrane segment at 270–290 (IIISIMLQLSQQLSGINAVFY) threads the bilayer. The tract at residues 277-279 (QLS) is important for selectivity against fructose. Residues 280 to 281 (QQ) and Asn286 each bind D-glucose. Residues 291–304 (YSTGIFKDAGVQEP) are Extracellular-facing. Residues 305–325 (VYATIGAGVVNTIFTVVSVFL) traverse the membrane as a helical segment. Residue Asn315 participates in D-glucose binding. Residues 326 to 331 (VERAGR) are Cytoplasmic-facing. Residues 332–352 (RTLHLIGLGGMAFCSILMTIS) form a helical membrane-spanning segment. Over 353–363 (LLLKDNYSWMS) the chain is Extracellular. N-linked (GlcNAc...) asparagine glycosylation is present at Asn358. Residues 364-389 (FICIGAILVFVAFFEIGPGPIPWFIV) form a helical membrane-spanning segment. Residues Glu378 and Trp386 each contribute to the D-glucose site. Over 390–399 (AELFGQGPRP) the chain is Cytoplasmic. The chain crosses the membrane as a helical span at residues 400–420 (AAMAVAGCSNWTSNFLVGLLF). Over 421 to 429 (PSAAFYLGA) the chain is Extracellular. Residues 430–450 (YVFIVFTVFLVIFWVFTFFKV) form a helical membrane-spanning segment. Residues 451–494 (PETRGRTFEEITRAFEGQTQTGTRGEKGPIMEMNSIQPTKDTNA) lie on the Cytoplasmic side of the membrane. The segment at 469–494 (TQTGTRGEKGPIMEMNSIQPTKDTNA) is disordered. A compositionally biased stretch (polar residues) spans 484-494 (NSIQPTKDTNA). The residue at position 485 (Ser485) is a Phosphoserine. The residue at position 492 (Thr492) is a Phosphothreonine.

Belongs to the major facilitator superfamily. Sugar transporter (TC 2.A.1.1) family. Glucose transporter subfamily. As to quaternary structure, interacts with SMIM43; the interaction may promote SLC2A1-mediated glucose transport to meet the energy needs of mesendoderm differentiation.

The protein resides in the cell membrane. It is found in the perikaryon. Its subcellular location is the cell projection. It carries out the reaction D-glucose(out) = D-glucose(in). It catalyses the reaction D-galactose(in) = D-galactose(out). Deoxyglucose transport is inhibited by D-glucose, D-galactose and maltose. Galactose transport is inhibited by D-glucose and maltose. In terms of biological role, facilitative glucose transporter. Can also mediate the uptake of various other monosaccharides across the cell membrane. Mediates the uptake of glucose, 2-deoxyglucose, galactose, mannose, xylose and fucose, and probably also dehydroascorbate. Does not mediate fructose transport. Required for mesendoderm differentiation. The polypeptide is Solute carrier family 2, facilitated glucose transporter member 3 (Bos taurus (Bovine)).